The following is an 858-amino-acid chain: Leucine--tRNA ligase (858 aa).

Positions 42-52 (PYPSGRLHMGH) match the 'HIGH' region motif. The 'KMSKS' region motif lies at 618 to 622 (KMSKS). Lysine 621 contacts ATP.

It belongs to the class-I aminoacyl-tRNA synthetase family.

It is found in the cytoplasm. It carries out the reaction tRNA(Leu) + L-leucine + ATP = L-leucyl-tRNA(Leu) + AMP + diphosphate. The protein is Leucine--tRNA ligase of Vibrio cholerae serotype O1 (strain ATCC 39315 / El Tor Inaba N16961).